The primary structure comprises 488 residues: MSNNVYERNRIKNDRYESGVIPYAKMGYWDANYSVKDTDLLALFRLTPQPGVDPVEAAAAVAGESSTATWTVVWTDLLTACDVYRAKAYRVDPVPSAADQYFAYIAYECDLFEEGSLANMTASIIGNVFGFKAVAALRLEDMRIPYAYLKTFQGPATGIIVERERLDTFGRPLLGATVKPKLGLSGKNYGRVVYEGLRGGIDFLKDDENINSQPFMRWRERFLYCMEGINRASAASGEVKGSYLNVTAATMEEMYERADYAKAVGSVIVMIDLVIGYTAIQSMAIWARKNDMILHLHRAGNSTYARQKNHGINFRVICKWMRMAGVDHIHAGTVVGKLEGDPLMVKGFYDVLRETELSINLPQGIFFEMDWASLRKCCPVASGGIHCGQMHQLVYYLGDDVVLQFGGGTIGHPDGIQAGATANRVALEAMILARNEGRDYVSEGPEILRDIAKLCGPLKTALDLWKGITFNYTSTDTADFVETATSNP.

Substrate-binding residues include Asn127 and Thr177. The active-site Proton acceptor is the Lys179. A substrate-binding site is contributed by Lys181. 3 residues coordinate Mg(2+): Lys205, Asp207, and Glu208. Position 205 is an N6-carboxylysine (Lys205). His297 (proton acceptor) is an active-site residue. Residues Arg298, His330, and Ser382 each coordinate substrate.

The protein belongs to the RuBisCO large chain family. Type I subfamily. In terms of assembly, heterohexadecamer of 8 large chains and 8 small chains. The cofactor is Mg(2+).

Its subcellular location is the plastid. It is found in the chloroplast. The enzyme catalyses 2 (2R)-3-phosphoglycerate + 2 H(+) = D-ribulose 1,5-bisphosphate + CO2 + H2O. The catalysed reaction is D-ribulose 1,5-bisphosphate + O2 = 2-phosphoglycolate + (2R)-3-phosphoglycerate + 2 H(+). Functionally, ruBisCO catalyzes two reactions: the carboxylation of D-ribulose 1,5-bisphosphate, the primary event in carbon dioxide fixation, as well as the oxidative fragmentation of the pentose substrate in the photorespiration process. Both reactions occur simultaneously and in competition at the same active site. In Olisthodiscus luteus (Marine phytoflagellate), this protein is Ribulose bisphosphate carboxylase large chain.